We begin with the raw amino-acid sequence, 20 residues long: Cytochrome c oxidase subunit 7B-heart, mitochondrial (20 aa).

It belongs to the cytochrome c oxidase VIIb family. As to quaternary structure, component of the cytochrome c oxidase (complex IV, CIV), a multisubunit enzyme composed of 14 subunits. The complex is composed of a catalytic core of 3 subunits MT-CO1, MT-CO2 and MT-CO3, encoded in the mitochondrial DNA, and 11 supernumerary subunits COX4I, COX5A, COX5B, COX6A, COX6B, COX6C, COX7A, COX7B, COX7C, COX8 and NDUFA4, which are encoded in the nuclear genome. The complex exists as a monomer or a dimer and forms supercomplexes (SCs) in the inner mitochondrial membrane with NADH-ubiquinone oxidoreductase (complex I, CI) and ubiquinol-cytochrome c oxidoreductase (cytochrome b-c1 complex, complex III, CIII), resulting in different assemblies (supercomplex SCI(1)III(2)IV(1) and megacomplex MCI(2)III(2)IV(2)).

It is found in the mitochondrion inner membrane. It catalyses the reaction 4 Fe(II)-[cytochrome c] + O2 + 8 H(+)(in) = 4 Fe(III)-[cytochrome c] + 2 H2O + 4 H(+)(out). Its pathway is energy metabolism; oxidative phosphorylation. Functionally, component of the cytochrome c oxidase, the last enzyme in the mitochondrial electron transport chain which drives oxidative phosphorylation. The respiratory chain contains 3 multisubunit complexes succinate dehydrogenase (complex II, CII), ubiquinol-cytochrome c oxidoreductase (cytochrome b-c1 complex, complex III, CIII) and cytochrome c oxidase (complex IV, CIV), that cooperate to transfer electrons derived from NADH and succinate to molecular oxygen, creating an electrochemical gradient over the inner membrane that drives transmembrane transport and the ATP synthase. Cytochrome c oxidase is the component of the respiratory chain that catalyzes the reduction of oxygen to water. Electrons originating from reduced cytochrome c in the intermembrane space (IMS) are transferred via the dinuclear copper A center (CU(A)) of subunit 2 and heme A of subunit 1 to the active site in subunit 1, a binuclear center (BNC) formed by heme A3 and copper B (CU(B)). The BNC reduces molecular oxygen to 2 water molecules using 4 electrons from cytochrome c in the IMS and 4 protons from the mitochondrial matrix. The protein is Cytochrome c oxidase subunit 7B-heart, mitochondrial of Thunnus obesus (Bigeye tuna).